Consider the following 351-residue polypeptide: tRNA N6-adenosine threonylcarbamoyltransferase (351 aa).

Fe cation-binding residues include H124 and H128. Substrate-binding positions include 146–150 (LVSGG), D180, G193, D197, and N285. D313 is a Fe cation binding site.

Belongs to the KAE1 / TsaD family. The cofactor is Fe(2+).

The protein localises to the cytoplasm. The enzyme catalyses L-threonylcarbamoyladenylate + adenosine(37) in tRNA = N(6)-L-threonylcarbamoyladenosine(37) in tRNA + AMP + H(+). In terms of biological role, required for the formation of a threonylcarbamoyl group on adenosine at position 37 (t(6)A37) in tRNAs that read codons beginning with adenine. Is involved in the transfer of the threonylcarbamoyl moiety of threonylcarbamoyl-AMP (TC-AMP) to the N6 group of A37, together with TsaE and TsaB. TsaD likely plays a direct catalytic role in this reaction. This is tRNA N6-adenosine threonylcarbamoyltransferase from Mycobacterium leprae (strain TN).